The following is a 321-amino-acid chain: Ribosomal RNA small subunit methyltransferase H (321 aa).

Residues 43-45 (GGH), Asp-63, Phe-89, Asp-110, and Gln-117 each bind S-adenosyl-L-methionine. Residues 286–321 (HPAGKALRAGPRETRDNPRSRSAVLRVAERSERHAA) are disordered. 2 stretches are compositionally biased toward basic and acidic residues: residues 295–304 (GPRETRDNPR) and 312–321 (VAERSERHAA).

This sequence belongs to the methyltransferase superfamily. RsmH family.

It localises to the cytoplasm. It carries out the reaction cytidine(1402) in 16S rRNA + S-adenosyl-L-methionine = N(4)-methylcytidine(1402) in 16S rRNA + S-adenosyl-L-homocysteine + H(+). In terms of biological role, specifically methylates the N4 position of cytidine in position 1402 (C1402) of 16S rRNA. The chain is Ribosomal RNA small subunit methyltransferase H from Acidithiobacillus ferrooxidans (strain ATCC 23270 / DSM 14882 / CIP 104768 / NCIMB 8455) (Ferrobacillus ferrooxidans (strain ATCC 23270)).